We begin with the raw amino-acid sequence, 90 residues long: Protein PRAC2 (90 aa).

As to expression, highly expressed in prostate and testis. Also detected in placenta, muscle, colon, peripheral blood leukocytes and skin.

It is found in the nucleus. This Homo sapiens (Human) protein is Protein PRAC2.